The primary structure comprises 96 residues: Prokineticin Bv8 (96 aa).

An N-terminal signal peptide occupies residues 1-19 (MKCFAQIVVLLLVIAFSHG). Positions 20–24 (AVITG) are may be important for binding to prokineticin receptor 2. 5 disulfides stabilise this stretch: Cys26-Cys38, Cys32-Cys50, Cys37-Cys78, Cys60-Cys86, and Cys80-Cys95.

As to expression, expressed by the skin glands.

It localises to the secreted. In terms of biological role, potent agonist for both PKR1/PROKR1 and PKR2/PROKR2, and inducer of a potent and long-lasting hyperalgesia. Shows an EC(50) of 0.264 nM, when tested on neuroblastoma cells (SH-SY5Y) which endogenously express mainly PKR2/PROKR2. Also potentiates capsaicin-induced TRPV1 current, when tested on DRG neurons. Induces a biphasic hyperalgesia to tactile and thermal stimuli after systemic injection of this protein into rat. The initial phase of hyperalgesia is caused by a local action on nociceptors, because intraplantar injection of this protein causes a strong and localized hyperalgesia with a similar time course to that of the initial phase of hyperalgesia seen with systemic injection. The secondary phase of hyperalgesia is not seen with local intraplantar injection and is therefore probably attributable to a central action of this protein. At subnanomolar concentrations, this protein both induces potent chemotaxis of macrophages and stimulates LPS-induced production of the pro-inflammatory cytokines IL-1 and IL-12. In vivo, this protein potently stimulates the contraction of the guinea-pig gastrointestinal (GI) smooth muscle (at nanomolar concentration). The chain is Prokineticin Bv8 from Bombina variegata (Yellow-bellied toad).